The following is a 1227-amino-acid chain: ATP-dependent helicase/nuclease subunit A (1227 aa).

The UvrD-like helicase ATP-binding domain maps to 37-503 (QKRTAEQIEA…ILLKENFRSQ (467 aa)). 58-65 (ASAGSGKT) contributes to the ATP binding site. The UvrD-like helicase C-terminal domain occupies 532-816 (SLVAGSPGQK…QLMTIHKSKG (285 aa)).

It belongs to the helicase family. AddA subfamily. Heterodimer of AddA and AddB/RexB. Requires Mg(2+) as cofactor.

The catalysed reaction is Couples ATP hydrolysis with the unwinding of duplex DNA by translocating in the 3'-5' direction.. It catalyses the reaction ATP + H2O = ADP + phosphate + H(+). Its function is as follows. The heterodimer acts as both an ATP-dependent DNA helicase and an ATP-dependent, dual-direction single-stranded exonuclease. Recognizes the chi site generating a DNA molecule suitable for the initiation of homologous recombination. The AddA nuclease domain is required for chi fragment generation; this subunit has the helicase and 3' -&gt; 5' nuclease activities. The polypeptide is ATP-dependent helicase/nuclease subunit A (Streptococcus suis (strain 98HAH33)).